The sequence spans 937 residues: Periplasmic nitrate reductase (937 aa).

The tat-type signal signal peptide spans 1–42 (MTSKIQGKKPTLSRRDFIKSAAAASAAASVGLSIPSVMSAEA). One can recognise a 4Fe-4S Mo/W bis-MGD-type domain in the interval 49–110 (WKWDKSVCRF…FCAKIMYGAD (62 aa)). [4Fe-4S] cluster-binding residues include Cys-56, Cys-59, Cys-63, and Cys-96. Residues Lys-98, Gln-166, Asn-191, Cys-195, 228 to 235 (WGANMAEM), Met-433, Gln-437, Asn-543, 568 to 569 (SE), Lys-591, Asp-618, and 827 to 836 (TGRVLEHWHS) each bind Mo-bis(molybdopterin guanine dinucleotide). Substrate is bound at residue Trp-903. Mo-bis(molybdopterin guanine dinucleotide)-binding residues include Asn-911 and Lys-928.

The protein belongs to the prokaryotic molybdopterin-containing oxidoreductase family. NasA/NapA/NarB subfamily. As to quaternary structure, component of the periplasmic nitrate reductase NapAB complex composed of NapA and NapB. Requires [4Fe-4S] cluster as cofactor. Mo-bis(molybdopterin guanine dinucleotide) is required as a cofactor. Post-translationally, predicted to be exported by the Tat system. The position of the signal peptide cleavage has not been experimentally proven.

It localises to the periplasm. It carries out the reaction 2 Fe(II)-[cytochrome] + nitrate + 2 H(+) = 2 Fe(III)-[cytochrome] + nitrite + H2O. Its function is as follows. Catalytic subunit of the periplasmic nitrate reductase complex NapAB. Receives electrons from NapB and catalyzes the reduction of nitrate to nitrite. The chain is Periplasmic nitrate reductase from Helicobacter hepaticus (strain ATCC 51449 / 3B1).